We begin with the raw amino-acid sequence, 335 residues long: uncharacterized protein (335 aa).

This is an uncharacterized protein from Escherichia coli (strain K12).